Reading from the N-terminus, the 571-residue chain is Hemagglutinin-neuraminidase (571 aa).

Residues 1–26 (MDRAVSRVVLENEEREAKNTWRFVFR) lie on the Intravirion side of the membrane. The helical transmembrane segment at 27-47 (IAVLLLIVMTLAISAAALVYS) threads the bilayer. The Virion surface portion of the chain corresponds to 48-571 (MGASTPRDLA…LVEILKDDRV (524 aa)). Asn-119 carries N-linked (GlcNAc...) asparagine; by host glycosylation. Positions 124-152 (GAPVHDPDYIGGIGKELIVDDTSDVTSFY) are important for interaction with fusion/F protein. Intrachain disulfides connect Cys-172–Cys-196, Cys-186–Cys-247, and Cys-238–Cys-251. The involved in neuraminidase activity stretch occupies residues 234–239 (NRKSCS). Asn-341 carries N-linked (GlcNAc...) asparagine; by host glycosylation. Cys-455 and Cys-465 form a disulfide bridge. Residues Asn-481 and Asn-508 are each glycosylated (N-linked (GlcNAc...) asparagine; by host). A disulfide bridge links Cys-531 with Cys-542.

It belongs to the paramyxoviruses hemagglutinin-neuraminidase family. As to quaternary structure, homotetramer; composed of disulfide-linked homodimers. Interacts with F protein trimer. Interacts with host CG-1B; this interaction inhibits viral adsorption and replication rather than internalization.

The protein localises to the virion membrane. It is found in the host cell membrane. It catalyses the reaction Hydrolysis of alpha-(2-&gt;3)-, alpha-(2-&gt;6)-, alpha-(2-&gt;8)- glycosidic linkages of terminal sialic acid residues in oligosaccharides, glycoproteins, glycolipids, colominic acid and synthetic substrates.. In terms of biological role, mediates the viral entry into the host cell together with fusion/F protein. Attaches the virus to sialic acid-containing cell receptors and thereby initiates infection. Binding of HN protein to the receptor induces a conformational change that allows the F protein to trigger virion/cell membranes fusion. Its function is as follows. Neuraminidase activity ensures the efficient spread of the virus by dissociating the mature virions from the neuraminic acid containing glycoproteins. In Newcastle disease virus (strain Iba/85) (NDV), this protein is Hemagglutinin-neuraminidase (HN).